A 398-amino-acid polypeptide reads, in one-letter code: Carbamoyl phosphate synthase small chain (398 aa).

CPSase regions lie at residues 1–205 (MTQT…TNDA) and 1–207 (MTQT…DACN). Residues serine 60, glycine 257, and glycine 259 each coordinate L-glutamine. Residues 209–397 (HIVAIDYGIK…FNLIMDYKRT (189 aa)) enclose the Glutamine amidotransferase type-1 domain. Cysteine 286 (nucleophile) is an active-site residue. L-glutamine-binding residues include leucine 287, glutamine 290, asparagine 328, glycine 330, and phenylalanine 331. Catalysis depends on residues histidine 370 and glutamate 372.

This sequence belongs to the CarA family. Composed of two chains; the small (or glutamine) chain promotes the hydrolysis of glutamine to ammonia, which is used by the large (or ammonia) chain to synthesize carbamoyl phosphate. Tetramer of heterodimers (alpha,beta)4.

The catalysed reaction is hydrogencarbonate + L-glutamine + 2 ATP + H2O = carbamoyl phosphate + L-glutamate + 2 ADP + phosphate + 2 H(+). The enzyme catalyses L-glutamine + H2O = L-glutamate + NH4(+). It participates in amino-acid biosynthesis; L-arginine biosynthesis; carbamoyl phosphate from bicarbonate: step 1/1. Its pathway is pyrimidine metabolism; UMP biosynthesis via de novo pathway; (S)-dihydroorotate from bicarbonate: step 1/3. Its function is as follows. Small subunit of the glutamine-dependent carbamoyl phosphate synthetase (CPSase). CPSase catalyzes the formation of carbamoyl phosphate from the ammonia moiety of glutamine, carbonate, and phosphate donated by ATP, constituting the first step of 2 biosynthetic pathways, one leading to arginine and/or urea and the other to pyrimidine nucleotides. The small subunit (glutamine amidotransferase) binds and cleaves glutamine to supply the large subunit with the substrate ammonia. This is Carbamoyl phosphate synthase small chain from Bartonella quintana (strain Toulouse) (Rochalimaea quintana).